The sequence spans 273 residues: MGKTFAVIGDPIDHSLSPNIHSAAFRELNLDCSYIAYRIPKDELGEGIEGLKKIQIAGFNVTIPHKIEMMKYLDKIDESCSLIGAVNTVVSNDGVLKGYNTDMDGFLEPLKKRNIEIENSNVLLLGAGGAARAIVAGFAKEKAKSITIANRTIEKANNLVEFAKKISLDANAITIDQVGESAKDYNIIVNATSIGLQNESSPISFEGVNEKTVVYDIVYLPMNTDFLKKAKEKNATIIFGYEMLLGQAVRAFEIWHGMEAPYNAMKKALLGGF.

Residues 15–17 and T62 contribute to the shikimate site; that span reads SLS. Catalysis depends on K66, which acts as the Proton acceptor. Residue E78 coordinates NADP(+). Shikimate-binding residues include N87 and D102. NADP(+) is bound by residues 126–130, 150–155, and I217; these read GAGGA and NRTIEK. Y219 lines the shikimate pocket. NADP(+) is bound at residue G240.

Belongs to the shikimate dehydrogenase family. As to quaternary structure, homodimer.

It catalyses the reaction shikimate + NADP(+) = 3-dehydroshikimate + NADPH + H(+). It functions in the pathway metabolic intermediate biosynthesis; chorismate biosynthesis; chorismate from D-erythrose 4-phosphate and phosphoenolpyruvate: step 4/7. In terms of biological role, involved in the biosynthesis of the chorismate, which leads to the biosynthesis of aromatic amino acids. Catalyzes the reversible NADPH linked reduction of 3-dehydroshikimate (DHSA) to yield shikimate (SA). The protein is Shikimate dehydrogenase (NADP(+)) of Nitrosopumilus maritimus (strain SCM1).